Here is a 334-residue protein sequence, read N- to C-terminus: UDP-glucose 4-epimerase (334 aa).

Residues 11-12, 31-36, 50-51, 72-76, Asn91, Thr116, Tyr140, Lys144, and Phe168 contribute to the NAD(+) site; these read YI, DNLQKG, DI, and FAANS. Substrate contacts are provided by Thr116 and Tyr140. The Proton acceptor role is filled by Tyr140. Residues Asn169, 188–189, 205–207, Arg220, and 281–284 contribute to the substrate site; these read HL, AIF, and RSGD.

It belongs to the NAD(P)-dependent epimerase/dehydratase family. As to quaternary structure, homodimer. NAD(+) is required as a cofactor.

The catalysed reaction is UDP-alpha-D-glucose = UDP-alpha-D-galactose. The protein operates within carbohydrate metabolism; galactose metabolism. Involved in the metabolism of galactose. Catalyzes the conversion of UDP-galactose (UDP-Gal) to UDP-glucose (UDP-Glc) through a mechanism involving the transient reduction of NAD. In Halalkalibacterium halodurans (strain ATCC BAA-125 / DSM 18197 / FERM 7344 / JCM 9153 / C-125) (Bacillus halodurans), this protein is UDP-glucose 4-epimerase (galE).